A 420-amino-acid chain; its full sequence is Protein PEA2 (420 aa).

The span at 132-153 (LTKENNNSFPNSKRARSSTNMG) shows a compositional bias: polar residues. The disordered stretch occupies residues 132–169 (LTKENNNSFPNSKRARSSTNMGGTDKFNKGAYHTDKAD). Residues 157-169 (KFNKGAYHTDKAD) show a composition bias toward basic and acidic residues. Serine 230 is subject to Phosphoserine. The tract at residues 323–363 (NSSRHNFGMSSPASSPVTWDPSSPSSVGSPTSGSGSRSLSI) is disordered. Polar residues predominate over residues 325–339 (SRHNFGMSSPASSPV). Positions 343 to 362 (PSSPSSVGSPTSGSGSRSLS) are enriched in low complexity.

In terms of biological role, localized to sites of polarized growth and is required for efficient mating and bipolar budding. The sequence is that of Protein PEA2 (PEA2) from Saccharomyces cerevisiae (strain ATCC 204508 / S288c) (Baker's yeast).